The primary structure comprises 232 residues: Large ribosomal subunit protein uL1 (232 aa).

Belongs to the universal ribosomal protein uL1 family. In terms of assembly, part of the 50S ribosomal subunit.

Binds directly to 23S rRNA. The L1 stalk is quite mobile in the ribosome, and is involved in E site tRNA release. In terms of biological role, protein L1 is also a translational repressor protein, it controls the translation of the L11 operon by binding to its mRNA. The polypeptide is Large ribosomal subunit protein uL1 (Rhizorhabdus wittichii (strain DSM 6014 / CCUG 31198 / JCM 15750 / NBRC 105917 / EY 4224 / RW1) (Sphingomonas wittichii)).